The primary structure comprises 784 residues: LPS-assembly protein LptD (784 aa).

The N-terminal stretch at 1 to 24 (MKKRIPTLLATMIATALYSQQGLA) is a signal peptide. 2 disulfides stabilise this stretch: cysteine 31–cysteine 724 and cysteine 173–cysteine 725.

The protein belongs to the LptD family. Component of the lipopolysaccharide transport and assembly complex. Interacts with LptE and LptA. Post-translationally, contains two intramolecular disulfide bonds.

It is found in the cell outer membrane. Together with LptE, is involved in the assembly of lipopolysaccharide (LPS) at the surface of the outer membrane. The sequence is that of LPS-assembly protein LptD from Escherichia coli O1:K1 / APEC.